We begin with the raw amino-acid sequence, 726 residues long: Pre-mRNA-splicing factor CLF1 (726 aa).

16 HAT repeats span residues 55–87, 89–121, 123–155, 157–188, 190–221, 223–262, 264–298, 308–340, 352–386, 396–432, 434–465, 467–499, 501–534, 536–567, 585–626, and 635–667; these read EFQARKRTEFESRIRYSRDSILAWTKYAQWEAS, NEYERSRSVFERALDVDPRSVDLWIKYTDMELK, RNINHARNLFDRAITLLPRVDALWYKYVYLEEL, LNVSGARQIFERWMQWEPNDKAWQSYIKLEER, NELDRASAIYERWIACRPIPKNWVTWAKFEED, GQPDKAREVFQTALEFFGDEEEQVEKAQSVFAAFARMETR, KEFERARVIYKFALARLPRSKSASLYAQYTKFEKQ, TVLGKRRIQYEEELAYDPTNYDAWFSLARLEED, VEPMRVREVYERAVANVPPALEKRYWRRYIYLWLQ, KDYDRARDVYKAAVKLVPHKTFTFAKLWLAYAYFEIR, LDVSAARKVLGAGIGMCPKPKLFTGYIELEMR, REFDRVRTLYEKFLTYDPSLSSAWIQWTQVESA, EDFERVRAIFELAVQQSLDMPEIVWKAYIDFEAG, GERERARNLYERLLERTSHVKVWISYALMEIA, GDAD…EHGD, and DMLPTTRKRWRKAEDGSGELEEYWDLVFPDDER. The tract at residues 682-726 is disordered; that stretch reads AWAQQRAGQGEEGGLSYDLPSDSEDENEDGDEDGDGREEEGMDQD. Residues 702–726 are compositionally biased toward acidic residues; that stretch reads SDSEDENEDGDEDGDGREEEGMDQD.

The protein belongs to the crooked-neck family. In terms of assembly, associated with the spliceosome.

It localises to the nucleus. Functionally, involved in pre-mRNA splicing and cell cycle progression. Required for the spliceosome assembly and initiation of the DNA replication. This chain is Pre-mRNA-splicing factor CLF1 (CLF1), found in Cryptococcus neoformans var. neoformans serotype D (strain B-3501A) (Filobasidiella neoformans).